The chain runs to 177 residues: R-phycoerythrin beta chain (177 aa).

2 residues coordinate phycourobilin: Cys50 and Cys61. Asn72 bears the N4-methylasparagine mark. (2R,3E)-phycoerythrobilin-binding residues include Cys82 and Cys158.

This sequence belongs to the phycobiliprotein family. Heterodimer of an alpha and a beta chain. In terms of processing, contains two covalently linked phycoerythrobilin chromophores and one covalently linked phycourobilin chromophore.

It localises to the plastid. It is found in the chloroplast thylakoid membrane. Functionally, light-harvesting photosynthetic bile pigment-protein from the phycobiliprotein complex. In Pyropia haitanensis (Red seaweed), this protein is R-phycoerythrin beta chain (cpeB).